The primary structure comprises 170 residues: MKDNERRILLGRVVGGFGLRGEIKMESWTEPRDAIFRYQPWLLRSPTGTESMLNGARGYDTGKRLIATFPGINDRNAVEAICGTEIYVPRSALPPPHPDEYYWVDLEGLQVHTLEGVVLGSVSHLFSNGANDVVVIHGERERLIPFVQPDYVKSVDFEAERIVVDWDPEF.

The PRC barrel domain occupies 97 to 170 (HPDEYYWVDL…RIVVDWDPEF (74 aa)).

This sequence belongs to the RimM family. Binds ribosomal protein uS19.

The protein resides in the cytoplasm. In terms of biological role, an accessory protein needed during the final step in the assembly of 30S ribosomal subunit, possibly for assembly of the head region. Essential for efficient processing of 16S rRNA. May be needed both before and after RbfA during the maturation of 16S rRNA. It has affinity for free ribosomal 30S subunits but not for 70S ribosomes. This chain is Ribosome maturation factor RimM, found in Xylella fastidiosa (strain M12).